The following is a 521-amino-acid chain: Glucosidase 2 subunit beta (521 aa).

The N-terminal stretch at 1–14 (MLLLLLLLLPLCWA) is a signal peptide. Ser24 carries the post-translational modification Phosphoserine. 2 consecutive LDL-receptor class A domains span residues 37–71 (FTCLDGTATIPFDQVNDDYCDCKDGSDEPGTAACP) and 69–113 (ACPN…TVCE). 2 disulfide bridges follow: Cys39–Cys58 and Cys56–Cys70. Asp49 contacts substrate. 6 residues coordinate Ca(2+): Gln50, Asp53, Tyr55, Asp57, Asp63, and Glu64. Asp53 lines the substrate pocket. Asn72 carries an N-linked (GlcNAc...) asparagine glycan. 3 disulfide bridges follow: Cys77–Cys99, Cys97–Cys112, and Cys100–Cys116. Residue Ser89 is modified to Phosphoserine; by PKC. 6 residues coordinate Ca(2+): Arg91, Asp94, Val96, Asp98, Asp104, and Glu105. The residue at position 166 (Lys166) is an N6-succinyllysine. Position 168 is a phosphoserine (Ser168). EF-hand domains follow at residues 209 to 244 (REQERAASAFQELDDNMDGMVSLAELQTHPELDTDG) and 245 to 290 (DGAL…TDIP). Residues Asp222, Asn224, Asp226, Met228, and Glu233 each coordinate Ca(2+). Disordered regions lie at residues 226–267 (DGMV…DTTS) and 280–350 (YRSE…EKMP). Composition is skewed to acidic residues over residues 241–253 (DTDGDGALSEEEA) and 308–331 (TEEEEEEEEEPEEEEEEEEEEEEA). The span at 332-343 (PPPLQPPQPPSP) shows a compositional bias: pro residues. Ser376 and Ser383 each carry phosphoserine; by PKC. Residues 406–507 (SQCYELTTNE…ELMTPAACPE (102 aa)) form the MRH domain. A disulfide bridge links Cys408 with Cys421. Phosphoserine; by PKC is present on Ser427. 2 disulfides stabilise this stretch: Cys464–Cys493 and Cys478–Cys505. N-linked (GlcNAc...) asparagine glycosylation is present at Asn469. Residues 518–521 (HDEL) carry the Prevents secretion from ER motif.

In terms of assembly, heterodimer of a catalytic alpha subunit (GANAB) and a beta subunit (PRKCSH). Binds glycosylated PTPRC. Expressed in kidney (at protein level).

The protein localises to the endoplasmic reticulum. It functions in the pathway glycan metabolism; N-glycan metabolism. Functionally, regulatory subunit of glucosidase II that cleaves sequentially the 2 innermost alpha-1,3-linked glucose residues from the Glc(2)Man(9)GlcNAc(2) oligosaccharide precursor of immature glycoproteins. Required for efficient PKD1/Polycystin-1 biogenesis and trafficking to the plasma membrane of the primary cilia. The chain is Glucosidase 2 subunit beta from Mus musculus (Mouse).